An 823-amino-acid chain; its full sequence is Nuclear pore complex protein Nup93-1 (823 aa).

Belongs to the nucleoporin interacting component (NIC) family. In terms of assembly, part of the nuclear pore complex (NPC). Interacts with msk (via C-terminus); this association might be facilitated by Nup75. Interacts with Mad (preferentially when phosphorylated). Interacts with Nup154 (via N-terminus). Interacts with the Polycomb group (PcG) proteins Pc and E(z).

The protein localises to the nucleus membrane. The protein resides in the nucleus. It localises to the nuclear pore complex. Its subcellular location is the nucleoplasm. Functionally, required for nuclear pore complex assembly, maintenance and function. Required for nuclear import of phosphorylated Mad via importin msk. Has no role in classical nuclear localization signal (cNLS)-dependent nuclear import via importin-beta. Mediates the association between the nuclear pore complex and a subclass of silenced regions bound by Polycomb group (PcG) proteins, enables long-range interactions between Polycomb loci and contributes to repression of polycomb targets. Together with Nup62 and Nup154, contributes to karyosome morphology and chromatin organization including attachment to the nuclear envelope in oocytes and nurse cells. This is Nuclear pore complex protein Nup93-1 from Drosophila melanogaster (Fruit fly).